A 212-amino-acid polypeptide reads, in one-letter code: MFTIALPKGALLKDSISTFKRAGLDFSDALEKNNRSLTFESNCKRAKALLVRNGDVPVYVSYGQADLGIVGYDVLRESELKVAKLLDLGFGGCHMSLAVKKNSNYLKPTDLPANCKVASKFIKTARFYFEELNIPVEIVHLTGSVELGPITGMAEAIVDLVATGKTLKENGLIKIDDLFYSTARLIGNPLSMRLDDNHLRDTILSIESTNDT.

The protein belongs to the ATP phosphoribosyltransferase family. Short subfamily. In terms of assembly, heteromultimer composed of HisG and HisZ subunits.

The protein resides in the cytoplasm. It carries out the reaction 1-(5-phospho-beta-D-ribosyl)-ATP + diphosphate = 5-phospho-alpha-D-ribose 1-diphosphate + ATP. Its pathway is amino-acid biosynthesis; L-histidine biosynthesis; L-histidine from 5-phospho-alpha-D-ribose 1-diphosphate: step 1/9. Its function is as follows. Catalyzes the condensation of ATP and 5-phosphoribose 1-diphosphate to form N'-(5'-phosphoribosyl)-ATP (PR-ATP). Has a crucial role in the pathway because the rate of histidine biosynthesis seems to be controlled primarily by regulation of HisG enzymatic activity. This chain is ATP phosphoribosyltransferase, found in Prochlorococcus marinus (strain MIT 9301).